Consider the following 315-residue polypeptide: Calumenin (315 aa).

An N-terminal signal peptide occupies residues Met1 to Ser19. EF-hand domains are found at residues Glu68–Lys103, Tyr104–Asp139, Gln151–Asp186, Met188–Asp223, Trp229–Asp264, and His265–Ser300. The Ca(2+) site is built by Asp81, Asp83, Asp85, Tyr87, Glu92, Asp117, Asn119, Asp121, and Glu128. Asn131 carries N-linked (GlcNAc...) asparagine glycosylation. Ca(2+) is bound by residues Asp164, Asp166, Asp168, Glu175, Asp201, Asn203, Asp205, Glu212, Asp242, Asn244, Asp246, Lys248, Glu253, Asp278, Asn280, Asp282, Lys284, and Glu289. The Prevents secretion from ER signature appears at His312–Phe315.

This sequence belongs to the CREC family. Interacts with ggcx.

The protein resides in the endoplasmic reticulum membrane. The protein localises to the golgi apparatus. Its subcellular location is the secreted. It is found in the melanosome. It localises to the sarcoplasmic reticulum lumen. Involved in regulation of vitamin K-dependent carboxylation of multiple N-terminal glutamate residues. Seems to inhibit gamma-carboxylase ggcx. Binds 7 calcium ions with a low affinity. In Xenopus tropicalis (Western clawed frog), this protein is Calumenin (calu).